A 215-amino-acid chain; its full sequence is Pyrrolidone-carboxylate peptidase (215 aa).

Active-site residues include E78, C141, and H165.

The protein belongs to the peptidase C15 family. In terms of assembly, homotetramer.

It is found in the cytoplasm. The catalysed reaction is Release of an N-terminal pyroglutamyl group from a polypeptide, the second amino acid generally not being Pro.. In terms of biological role, removes 5-oxoproline from various penultimate amino acid residues except L-proline. The sequence is that of Pyrrolidone-carboxylate peptidase (pcp) from Streptococcus pyogenes serotype M1.